A 125-amino-acid chain; its full sequence is Prepro-urotensin II-gamma (125 aa).

An N-terminal signal peptide occupies residues Met1–Ala21. A propeptide spanning residues Gln109–Arg111 is cleaved from the precursor. Cys119 and Cys124 are disulfide-bonded.

It belongs to the urotensin-2 family.

Its subcellular location is the secreted. Its function is as follows. Urotensin is found in the teleost caudal neurosecretory system. It has a suggested role in osmoregulation and as a corticotropin-releasing factor. The non-hormonal portion of this precursor may be a urotensin binding protein, urophysin. The chain is Prepro-urotensin II-gamma from Cyprinus carpio (Common carp).